We begin with the raw amino-acid sequence, 549 residues long: Oxygen-dependent choline dehydrogenase (549 aa).

4 to 33 (DFVIIGSGSAGSALAYRLSEDGKNSVLVIE) contacts FAD. The Proton acceptor role is filled by histidine 465.

Belongs to the GMC oxidoreductase family. FAD serves as cofactor.

The catalysed reaction is choline + A = betaine aldehyde + AH2. It catalyses the reaction betaine aldehyde + NAD(+) + H2O = glycine betaine + NADH + 2 H(+). It participates in amine and polyamine biosynthesis; betaine biosynthesis via choline pathway; betaine aldehyde from choline (cytochrome c reductase route): step 1/1. Functionally, involved in the biosynthesis of the osmoprotectant glycine betaine. Catalyzes the oxidation of choline to betaine aldehyde and betaine aldehyde to glycine betaine at the same rate. This chain is Oxygen-dependent choline dehydrogenase, found in Rhizobium etli (strain CIAT 652).